The primary structure comprises 261 residues: Pyrroline-5-carboxylate reductase (261 aa).

This sequence belongs to the pyrroline-5-carboxylate reductase family.

It localises to the cytoplasm. It carries out the reaction L-proline + NADP(+) = (S)-1-pyrroline-5-carboxylate + NADPH + 2 H(+). The catalysed reaction is L-proline + NAD(+) = (S)-1-pyrroline-5-carboxylate + NADH + 2 H(+). It functions in the pathway amino-acid biosynthesis; L-proline biosynthesis; L-proline from L-glutamate 5-semialdehyde: step 1/1. Its function is as follows. Catalyzes the reduction of 1-pyrroline-5-carboxylate (PCA) to L-proline. This chain is Pyrroline-5-carboxylate reductase, found in Thermus thermophilus (strain ATCC BAA-163 / DSM 7039 / HB27).